A 461-amino-acid polypeptide reads, in one-letter code: Photosystem II CP43 reaction center protein (461 aa).

Residues 1–2 (ME) constitute a propeptide that is removed on maturation. Residue threonine 3 is modified to N-acetylthreonine. Threonine 3 is subject to Phosphothreonine. The next 5 membrane-spanning stretches (helical) occupy residues 57 to 81 (LFEVAHFVPEKPMYEQGLILLPHLA), 122 to 143 (LIGPETLEESFPFFGYVWKDKS), 166 to 188 (KSVYFGGVYDTWAPGGGDVRKIT), 243 to 263 (KPFAWARRAFVWSGEAYLSYS), and 279 to 300 (WFNNTAYPSEFYGPTGPEASQA). Residue glutamate 355 coordinates [CaMn4O5] cluster. A helical membrane pass occupies residues 435-459 (RARAAAAGFEKGIDRDTEPVLSMTP).

The protein belongs to the PsbB/PsbC family. PsbC subfamily. As to quaternary structure, PSII is composed of 1 copy each of membrane proteins PsbA, PsbB, PsbC, PsbD, PsbE, PsbF, PsbH, PsbI, PsbJ, PsbK, PsbL, PsbM, PsbT, PsbX, PsbY, PsbZ, Psb30/Ycf12, at least 3 peripheral proteins of the oxygen-evolving complex and a large number of cofactors. It forms dimeric complexes. Requires Binds multiple chlorophylls and provides some of the ligands for the Ca-4Mn-5O cluster of the oxygen-evolving complex. It may also provide a ligand for a Cl- that is required for oxygen evolution. PSII binds additional chlorophylls, carotenoids and specific lipids. as cofactor.

The protein localises to the plastid. The protein resides in the chloroplast thylakoid membrane. Its function is as follows. One of the components of the core complex of photosystem II (PSII). It binds chlorophyll and helps catalyze the primary light-induced photochemical processes of PSII. PSII is a light-driven water:plastoquinone oxidoreductase, using light energy to abstract electrons from H(2)O, generating O(2) and a proton gradient subsequently used for ATP formation. This Psilotum nudum (Whisk fern) protein is Photosystem II CP43 reaction center protein.